The primary structure comprises 486 residues: Serine/threonine-protein phosphatase 2A 56 kDa regulatory subunit alpha isoform (486 aa).

S2 bears the N-acetylserine mark. Residues 22–52 (DGFTRKSVRKAQRQKRSQGSSQFRSQGSQAE) are disordered. The span at 27–37 (KSVRKAQRQKR) shows a compositional bias: basic residues. The segment covering 38–51 (SQGSSQFRSQGSQA) has biased composition (low complexity). A phosphoserine mark is found at S41, S42, and S49.

The protein belongs to the phosphatase 2A regulatory subunit B56 family. In terms of assembly, PP2A consists of a common heterodimeric core enzyme, composed of a 36 kDa catalytic subunit (subunit C) and a 65 kDa constant regulatory subunit (PR65 or subunit A), that associates with a variety of regulatory subunits. Proteins that associate with the core dimer include three families of regulatory subunits B (the R2/B/PR55/B55, R3/B''/PR72/PR130/PR59 and R5/B'/B56 families), the 48 kDa variable regulatory subunit, viral proteins, and cell signaling molecules. Interacts with SGO1. As to expression, widely expressed with highest levels in thymus and ovary.

The protein resides in the cytoplasm. It localises to the nucleus. Its subcellular location is the chromosome. It is found in the centromere. Its function is as follows. The B regulatory subunit might modulate substrate selectivity and catalytic activity, and might also direct the localization of the catalytic enzyme to a particular subcellular compartment. The protein is Serine/threonine-protein phosphatase 2A 56 kDa regulatory subunit alpha isoform (Ppp2r5a) of Mus musculus (Mouse).